A 181-amino-acid polypeptide reads, in one-letter code: Organelle RRM domain-containing protein 6, chloroplastic (181 aa).

The N-terminal 44 residues, 1-44 (MAISLGRVVVPSCTISGDRLFIPNFSAICSVSCGRINVGTGVIS), are a transit peptide targeting the chloroplast. The region spanning 77-155 (TKLYVSGLSF…RVIFVEEAKT (79 aa)) is the RRM domain. Positions 155–169 (TRSDMSRAKPRRDFP) are enriched in basic and acidic residues. Residues 155 to 181 (TRSDMSRAKPRRDFPKPQSKPRTFRTW) are disordered.

Interacts with MORF8/RIP1, MORF2/RIP2, MORF9/RIP9 and VAR3/OZ1.

Its subcellular location is the plastid. It localises to the chloroplast. Functionally, involved in C-to-U editing of chloroplastic RNA. Required for the photosynthetic subunit psbF transcript editing in chloroplast. The chain is Organelle RRM domain-containing protein 6, chloroplastic from Arabidopsis thaliana (Mouse-ear cress).